The following is a 180-amino-acid chain: UPF0743 protein C215.06c (180 aa).

C2HC LYAR-type zinc fingers lie at residues 1 to 26 (MVSF…SRCH) and 27 to 51 (GAYF…TSCM). Residues Cys6, Cys9, His21, Cys25, Cys32, Cys35, His47, and Cys50 each contribute to the Zn(2+) site. Positions 61-125 (LYRPTKKELK…KETVSSPAEQ (65 aa)) are disordered. Polar residues predominate over residues 77–95 (NAVNSKELSPNTDNQNTPA). Ser85 is modified (phosphoserine). Over residues 100–111 (HSLDENEKDKEN) the composition is skewed to basic and acidic residues.

This sequence belongs to the UPF0743 family.

Its subcellular location is the nucleus. This Schizosaccharomyces pombe (strain 972 / ATCC 24843) (Fission yeast) protein is UPF0743 protein C215.06c.